We begin with the raw amino-acid sequence, 278 residues long: Adenosylcobinamide-GDP ribazoletransferase (278 aa).

The next 7 helical transmembrane spans lie at 35-55 (VVGIIVGFILLFFCIIFNFIL), 62-82 (AVLPLMIIVVILTDLITTGAL), 116-136 (GALALILYFLLKFILLFSLTI), 141-161 (AAVYAIITYPVVSRFCSVVSC), 185-205 (LIVATVITLLYTIGMLFMPFI), 222-242 (LIIVIIVGLLALFAFAFSKLI), and 257-277 (LLEISSLVYIFLFLVIPTFFI).

The protein belongs to the CobS family. The cofactor is Mg(2+).

The protein resides in the cell inner membrane. The enzyme catalyses alpha-ribazole + adenosylcob(III)inamide-GDP = adenosylcob(III)alamin + GMP + H(+). It carries out the reaction alpha-ribazole 5'-phosphate + adenosylcob(III)inamide-GDP = adenosylcob(III)alamin 5'-phosphate + GMP + H(+). The protein operates within cofactor biosynthesis; adenosylcobalamin biosynthesis; adenosylcobalamin from cob(II)yrinate a,c-diamide: step 7/7. In terms of biological role, joins adenosylcobinamide-GDP and alpha-ribazole to generate adenosylcobalamin (Ado-cobalamin). Also synthesizes adenosylcobalamin 5'-phosphate from adenosylcobinamide-GDP and alpha-ribazole 5'-phosphate. The protein is Adenosylcobinamide-GDP ribazoletransferase of Fusobacterium nucleatum subsp. nucleatum (strain ATCC 25586 / DSM 15643 / BCRC 10681 / CIP 101130 / JCM 8532 / KCTC 2640 / LMG 13131 / VPI 4355).